The following is a 70-amino-acid chain: uncharacterized protein (70 aa).

Residues 15 to 37 (LLVSSISESAVALIIITIRILFS) form a helical membrane-spanning segment.

It localises to the membrane. This is an uncharacterized protein from Saccharomyces cerevisiae (strain ATCC 204508 / S288c) (Baker's yeast).